The primary structure comprises 484 residues: ATP synthase subunit beta (484 aa).

169–176 (GGAGVGKT) contributes to the ATP binding site.

This sequence belongs to the ATPase alpha/beta chains family. As to quaternary structure, F-type ATPases have 2 components, CF(1) - the catalytic core - and CF(0) - the membrane proton channel. CF(1) has five subunits: alpha(3), beta(3), gamma(1), delta(1), epsilon(1). CF(0) has three main subunits: a(1), b(2) and c(9-12). The alpha and beta chains form an alternating ring which encloses part of the gamma chain. CF(1) is attached to CF(0) by a central stalk formed by the gamma and epsilon chains, while a peripheral stalk is formed by the delta and b chains.

It localises to the cell membrane. It carries out the reaction ATP + H2O + 4 H(+)(in) = ADP + phosphate + 5 H(+)(out). Produces ATP from ADP in the presence of a proton gradient across the membrane. The catalytic sites are hosted primarily by the beta subunits. The polypeptide is ATP synthase subunit beta (Nocardioides sp. (strain ATCC BAA-499 / JS614)).